Consider the following 425-residue polypeptide: Serine--tRNA ligase (425 aa).

L-serine is bound at residue 231-233 (TAE). Residues 262–264 (RTE) and Val278 contribute to the ATP site. Glu285 serves as a coordination point for L-serine. An ATP-binding site is contributed by 349–352 (EVTS). An L-serine-binding site is contributed by Thr384.

This sequence belongs to the class-II aminoacyl-tRNA synthetase family. Type-1 seryl-tRNA synthetase subfamily. In terms of assembly, homodimer. The tRNA molecule binds across the dimer.

Its subcellular location is the cytoplasm. The enzyme catalyses tRNA(Ser) + L-serine + ATP = L-seryl-tRNA(Ser) + AMP + diphosphate + H(+). It catalyses the reaction tRNA(Sec) + L-serine + ATP = L-seryl-tRNA(Sec) + AMP + diphosphate + H(+). It functions in the pathway aminoacyl-tRNA biosynthesis; selenocysteinyl-tRNA(Sec) biosynthesis; L-seryl-tRNA(Sec) from L-serine and tRNA(Sec): step 1/1. In terms of biological role, catalyzes the attachment of serine to tRNA(Ser). Is also able to aminoacylate tRNA(Sec) with serine, to form the misacylated tRNA L-seryl-tRNA(Sec), which will be further converted into selenocysteinyl-tRNA(Sec). The protein is Serine--tRNA ligase of Dictyoglomus thermophilum (strain ATCC 35947 / DSM 3960 / H-6-12).